The chain runs to 680 residues: DNA-directed RNA polymerase subunit beta' (680 aa).

Residues C69, C71, C87, and C90 each contribute to the Zn(2+) site. Mg(2+)-binding residues include D489, D491, and D493.

It belongs to the RNA polymerase beta' chain family. RpoC1 subfamily. In terms of assembly, in plastids the minimal PEP RNA polymerase catalytic core is composed of four subunits: alpha, beta, beta', and beta''. When a (nuclear-encoded) sigma factor is associated with the core the holoenzyme is formed, which can initiate transcription. It depends on Mg(2+) as a cofactor. The cofactor is Zn(2+).

The protein localises to the plastid. It localises to the chloroplast. It catalyses the reaction RNA(n) + a ribonucleoside 5'-triphosphate = RNA(n+1) + diphosphate. Functionally, DNA-dependent RNA polymerase catalyzes the transcription of DNA into RNA using the four ribonucleoside triphosphates as substrates. In Barbarea verna (Land cress), this protein is DNA-directed RNA polymerase subunit beta'.